Here is a 328-residue protein sequence, read N- to C-terminus: Cell cycle control protein 50A (328 aa).

A disordered region spans residues 1–28; sequence MAMNYSAKDEVDGGPTGPPGGAAKTRRP. Ala2 is subject to N-acetylalanine. The tract at residues 2–48 is required for ATPase and aminophospholipid flippase activity; that stretch reads AMNYSAKDEVDGGPTGPPGGAAKTRRPDNTAFKQQRLPAWQPILTAG. At 2–49 the chain is on the cytoplasmic side; the sequence is AMNYSAKDEVDGGPTGPPGGAAKTRRPDNTAFKQQRLPAWQPILTAGT. The tract at residues 49–315 is interaction with ATP8A2; the sequence is TVLPTFFIIG…LGVVLLVINH (267 aa). The chain crosses the membrane as a helical span at residues 50–70; sequence VLPTFFIIGLIFIPIGIGIFV. Residues 71–292 are Exoplasmic loop-facing; that stretch reads TSNNIREIEG…SWMGGKNPFL (222 aa). Residues 102-125 are disordered; sequence RDDSQLNGDPSALLNPSKECEPYR. An intrachain disulfide couples Cys121 to Cys135. N-linked (GlcNAc...) asparagine glycosylation is found at Asn144 and Asn261. A helical membrane pass occupies residues 293–313; it reads GIAYITIGSISFLLGVVLLVI. Residues 314-328 are Cytoplasmic-facing; the sequence is NHKYRNSSNTADITI.

Belongs to the CDC50/LEM3 family. Component of various P4-ATPase flippase complexes which consists of a catalytic alpha subunit and an accessory beta subunit. Interacts with ATP8A1 to form a flippase complex; this complex forms an intermediate phosphoenzyme. Interacts with ATP8A2 to form a flippase complex. TP8B1:TMEM30A and ATP8B2:TMEM30A flippase complexes have been shown to form intermediate phosphoenzymes in vitro. Interacts with alpha subunits ATP8A1, ATP8B1, ATP8B2, ATP8B4, ATP10A, ATP10B, ATP10D, ATP11A, ATP11B and ATP11C. Post-translationally, N-glycosylated. Contains high mannose-type oligosaccharides.

The protein resides in the membrane. The protein localises to the golgi apparatus. Its subcellular location is the cytoplasmic vesicle. It is found in the secretory vesicle membrane. It localises to the apical cell membrane. The protein resides in the photoreceptor inner segment. The protein localises to the cell projection. Its subcellular location is the cilium. It is found in the photoreceptor outer segment. Accessory component of a P4-ATPase flippase complex which catalyzes the hydrolysis of ATP coupled to the transport of aminophospholipids from the outer to the inner leaflet of various membranes and ensures the maintenance of asymmetric distribution of phospholipids. Phospholipid translocation also seems to be implicated in vesicle formation and in uptake of lipid signaling molecules. The beta subunit may assist in binding of the phospholipid substrate. Required for the proper folding, assembly and ER to Golgi exit of the ATP8A2:TMEM30A flippase complex. ATP8A2:TMEM30A may be involved in regulation of neurite outgrowth, and, reconstituted to liposomes, predomiminantly transports phosphatidylserine (PS) and to a lesser extent phosphatidylethanolamine (PE). The ATP8A1:TMEM30A flippase complex seems to play a role in regulation of cell migration probably involving flippase-mediated translocation of phosphatidylethanolamine (PE) at the plasma membrane. Required for the formation of the ATP8A2, ATP8B1 and ATP8B2 P-type ATPAse intermediate phosphoenzymes. Involved in uptake of platelet-activating factor (PAF). Can also mediate the export of alpha subunits ATP8A1, ATP8B1, ATP8B2, ATP8B4, ATP10A, ATP10B, ATP10D, ATP11A, ATP11B and ATP11C from ER to other membrane localizations. This chain is Cell cycle control protein 50A, found in Rattus norvegicus (Rat).